A 421-amino-acid chain; its full sequence is Testin (421 aa).

Residues 92–199 (MILTNPVAAK…GDVKLPREMD (108 aa)) enclose the PET domain. Residues 134-164 (KQPVAGSEGAQYRKKQLAKQLPAHDQDPSKC) are disordered. Residues 155 to 164 (PAHDQDPSKC) show a composition bias toward basic and acidic residues. 3 LIM zinc-binding domains span residues 234–297 (YSCY…CDSE), 299–359 (PRCA…NHAV), and 362–421 (QGCH…KMMS).

The protein belongs to the prickle / espinas / testin family. Interacts via LIM domain 1 with ZYX. Interacts (via LIM domain 3) with ENAH and VASP. Interacts with ALKBH4, talin, actin, alpha-actinin, GRIP1 and PXN. Interacts (via LIM domain 2) with ACTL7A (via N-terminus). Heterodimer with ACTL7A; the heterodimer interacts with ENAH to form a heterotrimer.

The protein resides in the cytoplasm. It localises to the cell junction. It is found in the focal adhesion. In terms of biological role, scaffold protein that may play a role in cell adhesion, cell spreading and in the reorganization of the actin cytoskeleton. Plays a role in the regulation of cell proliferation. May act as a tumor suppressor. The protein is Testin (TES) of Rhinolophus ferrumequinum (Greater horseshoe bat).